The chain runs to 456 residues: Trigger factor (456 aa).

The region spanning 192–277 (GDTVVIDFVG…IHEVKTKEVP (86 aa)) is the PPIase FKBP-type domain.

The protein belongs to the FKBP-type PPIase family. Tig subfamily.

It is found in the cytoplasm. The enzyme catalyses [protein]-peptidylproline (omega=180) = [protein]-peptidylproline (omega=0). Involved in protein export. Acts as a chaperone by maintaining the newly synthesized protein in an open conformation. Functions as a peptidyl-prolyl cis-trans isomerase. The polypeptide is Trigger factor (Streptococcus pyogenes serotype M4 (strain MGAS10750)).